Here is a 122-residue protein sequence, read N- to C-terminus: Yop proteins translocation protein X (122 aa).

Residues 71–87 (HRAQDYRRELDTLQSLL) are a coiled coil.

Interacts with YscY.

It is found in the secreted. In terms of biological role, required for Yop secretion. In Yersinia enterocolitica, this protein is Yop proteins translocation protein X (yscX).